The primary structure comprises 709 residues: Eukaryotic translation initiation factor 3 subunit B (709 aa).

Residues 1-98 (MSINEEEYLR…LFIQYKNVAD (98 aa)) are sufficient for interaction with HCR1 and TIF32. The tract at residues 1–221 (MSINEEEYLR…GIQAWGGADF (221 aa)) is sufficient for interaction with PIC8. The 88-residue stretch at 37–124 (NYVIVDGAPI…HRLLVNRLSD (88 aa)) folds into the RRM domain.

The protein belongs to the eIF-3 subunit B family. As to quaternary structure, component of the eukaryotic translation initiation factor 3 (eIF-3) complex.

The protein localises to the cytoplasm. Its function is as follows. RNA-binding component of the eukaryotic translation initiation factor 3 (eIF-3) complex, which is involved in protein synthesis of a specialized repertoire of mRNAs and, together with other initiation factors, stimulates binding of mRNA and methionyl-tRNAi to the 40S ribosome. The eIF-3 complex specifically targets and initiates translation of a subset of mRNAs involved in cell proliferation. The protein is Eukaryotic translation initiation factor 3 subunit B of Lodderomyces elongisporus (strain ATCC 11503 / CBS 2605 / JCM 1781 / NBRC 1676 / NRRL YB-4239) (Yeast).